Reading from the N-terminus, the 841-residue chain is Protein translocase subunit SecA (841 aa).

Residues Gln85, 103-107, and Asp492 contribute to the ATP site; that span reads GEGKT. Positions 788-841 are disordered; sequence EVVQGQTTAHQPQEGDEEKTVKKKPVRKVVDIGRNSPCHCGSGKKYKNCHGKTE. Residues Cys825, Cys827, Cys836, and His837 each coordinate Zn(2+). Residues 829 to 841 are compositionally biased toward basic residues; sequence SGKKYKNCHGKTE.

The protein belongs to the SecA family. Monomer and homodimer. Part of the essential Sec protein translocation apparatus which comprises SecA, SecYEG and auxiliary proteins SecDF. Other proteins may also be involved. Requires Zn(2+) as cofactor.

The protein localises to the cell membrane. It is found in the cytoplasm. The catalysed reaction is ATP + H2O + cellular proteinSide 1 = ADP + phosphate + cellular proteinSide 2.. Part of the Sec protein translocase complex. Interacts with the SecYEG preprotein conducting channel. Has a central role in coupling the hydrolysis of ATP to the transfer of proteins into and across the cell membrane, serving as an ATP-driven molecular motor driving the stepwise translocation of polypeptide chains across the membrane. This Bacillus pumilus (strain SAFR-032) protein is Protein translocase subunit SecA.